Consider the following 162-residue polypeptide: MVEQKDKYRPCVGIMLFNRQGHAFIGKRFDSDSYWQMPQGGVDDGEELEQAALRELLEEVGTNKVKVITKSKDWIYYNLPEEVIPICWNGKYSGQKQRWFLMKFCGEDEDIDINYTGHPEFKEWRWQGIDSLVASAISFKKEVYKTVIEEFSSIIKASTISS.

Positions 7-149 constitute a Nudix hydrolase domain; sequence KYRPCVGIML…KKEVYKTVIE (143 aa). Positions 40-61 match the Nudix box motif; it reads GGVDDGEELEQAALRELLEEVG.

Belongs to the Nudix hydrolase family. RppH subfamily. It depends on a divalent metal cation as a cofactor.

Functionally, accelerates the degradation of transcripts by removing pyrophosphate from the 5'-end of triphosphorylated RNA, leading to a more labile monophosphorylated state that can stimulate subsequent ribonuclease cleavage. The sequence is that of RNA pyrophosphohydrolase from Wolbachia sp. subsp. Drosophila simulans (strain wRi).